Here is a 126-residue protein sequence, read N- to C-terminus: SOSS complex subunit C homolog (126 aa).

Residues 106 to 126 (LEPLPSPATTPTAPPSHSISK) are disordered. The segment covering 107-119 (EPLPSPATTPTAP) has biased composition (pro residues).

It belongs to the SOSS-C family.

This chain is SOSS complex subunit C homolog, found in Drosophila sechellia (Fruit fly).